The primary structure comprises 337 residues: Glyceraldehyde-3-phosphate dehydrogenase (337 aa).

NAD(+) contacts are provided by residues 13–14, Asp-35, and Arg-80; that span reads RI. D-glyceraldehyde 3-phosphate is bound by residues 151 to 153, Thr-182, 211 to 212, and Arg-234; these read SCT and TG. The active-site Nucleophile is the Cys-152. Asn-316 provides a ligand contact to NAD(+).

The protein belongs to the glyceraldehyde-3-phosphate dehydrogenase family. Homotetramer.

The protein resides in the cytoplasm. It catalyses the reaction D-glyceraldehyde 3-phosphate + phosphate + NAD(+) = (2R)-3-phospho-glyceroyl phosphate + NADH + H(+). It participates in carbohydrate degradation; glycolysis; pyruvate from D-glyceraldehyde 3-phosphate: step 1/5. The polypeptide is Glyceraldehyde-3-phosphate dehydrogenase (GPD1) (Monascus purpureus (Red mold)).